The sequence spans 440 residues: MAEYDLTKRMAPFFDLHLVIPLLEFIEPRSIYDHDSLIKVHRRVLLKTNMIDSVIETYPEGEVPKELEQRKVEILSQREKLKVKVDPVVEILESEPVKAMMDSRELTNNRILEYVTANHGLTEEMLDSLFRYAKFQYECGNYSAASLCLDYYRNIVPQQNPNYLSALYGKLASEILLQEWTHAKDDLTKLRTYIDFNPFDTELESVQQRAWLMHWALFVYFNYPKGRDEIVEMYLNQQPYLNTIQIACPHLLRYLAVAVVTSKTKQKNSLKDLIKVIDIERHNYEXPVTXFLTCLYIKYDFDEAQKKVEEVLSNDFFLTACLEDFRESARLLIFEMFCRIHQCISIQMLAERLNMQQVEAERWIVDLIRTYRIDGAKIDSKLGQVVMGAKTTSVHEQVMENTKRLTFRAQQIALQLEKMKLDKKVCIILNFIYCEDFRNF.

The PCI domain maps to valine 219–threonine 392.

The protein belongs to the eIF-3 subunit E family. Component of the eukaryotic translation initiation factor 3 (eIF-3) complex.

It is found in the cytoplasm. Component of the eukaryotic translation initiation factor 3 (eIF-3) complex, which is involved in protein synthesis of a specialized repertoire of mRNAs and, together with other initiation factors, stimulates binding of mRNA and methionyl-tRNAi to the 40S ribosome. The eIF-3 complex specifically targets and initiates translation of a subset of mRNAs involved in cell proliferation. This chain is Eukaryotic translation initiation factor 3 subunit E, found in Brugia malayi (Filarial nematode worm).